The sequence spans 372 residues: GDSL esterase/lipase At5g45910 (372 aa).

Residues Met1–Ser19 form the signal peptide. The active-site Nucleophile is the Ser37. Asn66, Asn101, and Asn137 each carry an N-linked (GlcNAc...) asparagine glycan. Residues Asp345 and His348 contribute to the active site.

The protein belongs to the 'GDSL' lipolytic enzyme family.

The protein resides in the secreted. The polypeptide is GDSL esterase/lipase At5g45910 (Arabidopsis thaliana (Mouse-ear cress)).